Reading from the N-terminus, the 188-residue chain is MMGMIIIVPIGEVPGDVLAFLQNSLSGFYAKYGIEVRLVGGLSLSKFQHAFDFERRQFLARYFLPVLSYIRKDFNAKAALGVVNVDIYELGLNFIFGLAHPGLRVAIISLYRLYPEFYGNPPDRKLLKERALKEAMHELGHVFGLEHCPNPKCVMHFSNSIIDTDIKSWMYCEKCLRKLEKNLTRSYV.

H137 is a Zn(2+) binding site. The Proton acceptor role is filled by E138. 6 residues coordinate Zn(2+): H141, H147, C148, C153, C172, and C175.

The protein belongs to the peptidase M54 family. In terms of assembly, monomer. Zn(2+) is required as a cofactor.

In terms of biological role, probable zinc metalloprotease whose natural substrate is unknown. This chain is Archaemetzincin, found in Pyrococcus abyssi (strain GE5 / Orsay).